Reading from the N-terminus, the 270-residue chain is 3-phenylpropionate-dihydrodiol/cinnamic acid-dihydrodiol dehydrogenase (270 aa).

Position 10 to 34 (10 to 34 (FITGGGSGLGLALVERFIEEGAQVA)) interacts with NAD(+). A substrate-binding site is contributed by Ser-143. Catalysis depends on Tyr-156, which acts as the Proton acceptor.

It belongs to the short-chain dehydrogenases/reductases (SDR) family.

The catalysed reaction is 3-(cis-5,6-dihydroxycyclohexa-1,3-dien-1-yl)propanoate + NAD(+) = 3-(2,3-dihydroxyphenyl)propanoate + NADH + H(+). It catalyses the reaction (2E)-3-(cis-5,6-dihydroxycyclohexa-1,3-dien-1-yl)prop-2-enoate + NAD(+) = (2E)-3-(2,3-dihydroxyphenyl)prop-2-enoate + NADH + H(+). It participates in aromatic compound metabolism; 3-phenylpropanoate degradation. In terms of biological role, converts 3-phenylpropionate-dihydrodiol (PP-dihydrodiol) and cinnamic acid-dihydrodiol (CI-dihydrodiol) into 3-(2,3-dihydroxylphenyl)propanoic acid (DHPP) and 2,3-dihydroxicinnamic acid (DHCI), respectively. This is 3-phenylpropionate-dihydrodiol/cinnamic acid-dihydrodiol dehydrogenase from Escherichia coli (strain K12 / MC4100 / BW2952).